A 520-amino-acid polypeptide reads, in one-letter code: GMP synthase [glutamine-hydrolyzing] (520 aa).

The Glutamine amidotransferase type-1 domain maps to 9–202; the sequence is TILIIDFGSQ…VHRIVGVKPG (194 aa). Catalysis depends on Cys86, which acts as the Nucleophile. Catalysis depends on residues His176 and Glu178. Residues 203–395 form the GMPS ATP-PPase domain; that stretch reads WTMGAYREQA…LGLPDSFIGR (193 aa). 230–236 is an ATP binding site; that stretch reads SGGVDSS.

Homodimer.

It catalyses the reaction XMP + L-glutamine + ATP + H2O = GMP + L-glutamate + AMP + diphosphate + 2 H(+). Its pathway is purine metabolism; GMP biosynthesis; GMP from XMP (L-Gln route): step 1/1. Its function is as follows. Catalyzes the synthesis of GMP from XMP. This chain is GMP synthase [glutamine-hydrolyzing], found in Brucella ovis (strain ATCC 25840 / 63/290 / NCTC 10512).